A 229-amino-acid polypeptide reads, in one-letter code: Large ribosomal subunit protein uL1 (229 aa).

The protein belongs to the universal ribosomal protein uL1 family. Part of the 50S ribosomal subunit.

Its function is as follows. Binds directly to 23S rRNA. The L1 stalk is quite mobile in the ribosome, and is involved in E site tRNA release. In terms of biological role, protein L1 is also a translational repressor protein, it controls the translation of the L11 operon by binding to its mRNA. The chain is Large ribosomal subunit protein uL1 from Ureaplasma urealyticum serovar 10 (strain ATCC 33699 / Western).